Reading from the N-terminus, the 400-residue chain is Elongation factor Tu (400 aa).

The tr-type G domain maps to 10 to 209; it reads KPHVNIGTIG…EVDNYIPTPE (200 aa). Residues 19-26 form a G1 region; sequence GHVDHGKT. 19-26 contributes to the GTP binding site; the sequence is GHVDHGKT. Thr26 contributes to the Mg(2+) binding site. A G2 region spans residues 60–64; that stretch reads GITIN. Residues 81–84 are G3; that stretch reads DCPG. GTP is bound by residues 81-85 and 136-139; these read DCPGH and NKCD. Positions 136–139 are G4; sequence NKCD. Residues 174 to 176 are G5; sequence SAL.

The protein belongs to the TRAFAC class translation factor GTPase superfamily. Classic translation factor GTPase family. EF-Tu/EF-1A subfamily. As to quaternary structure, monomer.

Its subcellular location is the cytoplasm. It catalyses the reaction GTP + H2O = GDP + phosphate + H(+). Its function is as follows. GTP hydrolase that promotes the GTP-dependent binding of aminoacyl-tRNA to the A-site of ribosomes during protein biosynthesis. This is Elongation factor Tu from Ruminiclostridium cellulolyticum (strain ATCC 35319 / DSM 5812 / JCM 6584 / H10) (Clostridium cellulolyticum).